We begin with the raw amino-acid sequence, 793 residues long: MVKNFFHIRRLKKILAKIKSFEKEMSSLSDLDLQKKTDEFKKRLADGENLDQLLPEAYAVVREVDKRILGLFPYDVQVMGAIVLHEGNIAEMATGEGKTLTATMPLYLNALSGQGAMLVTPNSYLALRDAKEMGPVYRFLGLTIETAVRADESKPLETKEKRRIYQADIIYTTNSALGFDYLIENLAENKKNQFLREFNYVIIDEIDSILLDSAQTPLIISGAPRVQSNFYDMMNTLVQTLYEDEDYCYDDEKNEVWLTQKGIRAAESFLGLNHLFSKENQELVRHLNLALRAHMVYKKDQDYVVRQSENEAEVVLLDRATGRLMELTRLQGGQHQAIEAKEHVKLTQETRAMASITYQNLFKLFRKLSGMTGTGKVVESEFLETYSMSVVKIPTNCPVIRRDYPDQIYQTLPEKVFASLDEVKHYHAKGNPLLIFTGSVEMSEIYSSLLLREGIAHNLLNANNVAREAQMIAESGQLGAVTVATSMAGRGTDIKLGPGVADLGGLVVIGTERMENHRIDLQIRGRSGRQGDPGISKFFISLEDDLLKKWGPDWIKNFYRDYSPEDFKNNPILLKQRRFKKLVSKAQKASEGNAKLSRRLTLEYAQSMKIQRELTYAERNRLLEDTNEMEEEINRVIEYVIKQVAYEQSFENRADFYRFILHHFSNRAERIPQEFDIHSPKEVSHLLQAIAEQELLAKKSYLKSDKLYSQFQRLAILKAIDENWVEQVDYLQQLKSALSGFHTSNKKPIVEYYQEAYDGFEYMKERMKHQIVKNLLMSELALNPKGEVVMYFP.

ATP contacts are provided by residues Q77, 95 to 99 (GEGKT), and D493.

This sequence belongs to the SecA family. Monomer and homodimer (Potential). Part of the accessory SecA2/SecY2 protein translocation apparatus required to export cell wall protein GspB.

The protein localises to the cell membrane. It localises to the cytoplasm. It carries out the reaction ATP + H2O + cellular proteinSide 1 = ADP + phosphate + cellular proteinSide 2.. Part of the accessory SecA2/SecY2 system specifically required to export GspB, a serine-rich repeat cell wall protein encoded upstream in the same operon. The sequence is that of Protein translocase subunit SecA 2 from Streptococcus gordonii.